A 372-amino-acid chain; its full sequence is tRNA-specific 2-thiouridylase MnmA (372 aa).

ATP is bound by residues 9-16 and M35; that span reads GLSGGVDS. Residues 95–97 form an interaction with target base in tRNA region; it reads NPD. The active-site Nucleophile is the C100. C100 and C198 are oxidised to a cystine. Position 124 (G124) interacts with ATP. The tract at residues 148 to 150 is interaction with tRNA; the sequence is KDQ. The active-site Cysteine persulfide intermediate is C198. An interaction with tRNA region spans residues 317–318; sequence RY.

This sequence belongs to the MnmA/TRMU family.

It is found in the cytoplasm. The enzyme catalyses S-sulfanyl-L-cysteinyl-[protein] + uridine(34) in tRNA + AH2 + ATP = 2-thiouridine(34) in tRNA + L-cysteinyl-[protein] + A + AMP + diphosphate + H(+). In terms of biological role, catalyzes the 2-thiolation of uridine at the wobble position (U34) of tRNA, leading to the formation of s(2)U34. In Delftia acidovorans (strain DSM 14801 / SPH-1), this protein is tRNA-specific 2-thiouridylase MnmA.